Consider the following 233-residue polypeptide: MSVHIEAKQGEIAETILLPGDPLRAKYIAETFLEDVVLFNQVRGMLGFTGTYKGEKVSVMGTGMGIPSISIYVNELIQSYDVKNLIRVGTMGGIQADVKVRDVVIAQAASTDSQINRNTFAGVDFAPVADFSLLKKAYDAGVEKGLSLKVGNVFSADRFYNDQLDKQQLADYGVLGIEMEAAALYTLAQKYGRRALAILTVSDHIFTGEETSAEERQTTFNDMIVVALEAAIK.

A purine D-ribonucleoside is bound at residue H4. Residues G20, R24, R43, and 87–90 (RVGT) contribute to the phosphate site. A purine D-ribonucleoside contacts are provided by residues 178 to 180 (EME) and 202 to 203 (SD). The active-site Proton donor is D203.

This sequence belongs to the PNP/UDP phosphorylase family. Homohexamer; trimer of homodimers.

The enzyme catalyses a purine D-ribonucleoside + phosphate = a purine nucleobase + alpha-D-ribose 1-phosphate. The catalysed reaction is a purine 2'-deoxy-D-ribonucleoside + phosphate = a purine nucleobase + 2-deoxy-alpha-D-ribose 1-phosphate. Catalyzes the reversible phosphorolytic breakdown of the N-glycosidic bond in the beta-(deoxy)ribonucleoside molecules, with the formation of the corresponding free purine bases and pentose-1-phosphate. The polypeptide is Purine nucleoside phosphorylase DeoD-type (Listeria innocua serovar 6a (strain ATCC BAA-680 / CLIP 11262)).